Consider the following 524-residue polypeptide: Cytochrome P450 monooxygenase drtD (524 aa).

Residues 2–22 traverse the membrane as a helical segment; that stretch reads SDTYLVAASGLAVCFFVLYLL. A heme-binding site is contributed by cysteine 418.

The protein belongs to the cytochrome P450 family. Heme is required as a cofactor.

It is found in the membrane. It functions in the pathway secondary metabolite biosynthesis; terpenoid biosynthesis. Cytochrome P450 monooxygenase; part of the gene cluster that mediates the biosynthesis of various drimane-type sesquiterpene esters, compounds that exhibit diverse biological activities and are widely present in eukaryotes. The pathway begins with the synthesis of the backbone drimenol by the terpene cyclase drtB using farnesyl pyrophosphate (FPP) as substrate. The cytochrome P450 monooxygenase drtD is then responsible for the hydroxylations at C-6, C-9 and C-12, as well as the oxidation of hydroxyl groups at C-6 and C-11 to a ketone and an aldehyde, respectively. Then, the biosynthesis can go in two directions, either the hydroxylated drimenol is further hydroxylated at C-2 and C-3 by an enzyme(s) not associated with the drt cluster, or the FAD-binding oxidoreductase drtC further oxidizes C-11 or C-12 to form the butyrolactone ring. DrtB, drtD and drtC are solely responsible for the formation of the different drimane structures observed during drimane sesquiterpenes biosynthesis. The polyketide synthase drtA synthesizes different lengths (C6 and C8) of PKS chains, which are then oxidized to varying degrees by the short-chain dehydrogenase drtF. Finally, these PKS chains are transferred onto drimane sesquiterpenes by the acyltransferase drtE, forming the sesquiterpene esters. In addition to the different fatty acyl-CoA chains produced by drtA, drtE is also able to use cinnamoyl-CoA as a substrate. The sequence is that of Cytochrome P450 monooxygenase drtD from Aspergillus calidoustus.